We begin with the raw amino-acid sequence, 632 residues long: MTTSALRRQVKNIVHNYSEAEIKVREATSNDPWGPPSSLMSEIADLTFNTVAFTEVMGMLWRRLNDSGKNWRHVYKALTLLDYLLKTGSERVAHQCRENLYTIQTLKDFQYIDRDGKDQGVNVREKVKQVMALLKDEERLRQERTHALKTKERMALEGIGIGSGQLGFSRRYGEDYSRSRGSPSSYNSSSSSPRYTSDLEQARPQTSGEEELQLQLALAMSREEAEKPVPPASHRDEDLQLQLALRLSRQEHEKEVRSWQGDGSPMANGAGAVVHHQRDREPEREERKEEEKLKTSQSSILDLADIFVPALAPPSTHCSADPWDIPGFRPNTEASGSSWGPSADPWSPIPSGTVLSRSQPWDLTPMLSSSEPWGRTPVLPAGPPTTDPWALNSPHHKLPSTGADPWGASLETSDTPGGASTFDPFAKPPESTETKEGLEQALPSGKPSSPVELDLFGDPSPSSKQNGTKEPDALDLGILGEALTQPSKEARACRTPESFLGPSASSLVNLDSLVKAPQVAKTRNPFLTGLSAPSPTNPFGAGEPGRPTLNQMRTGSPALGLAGGPVGAPLGSMTYSASLPLPLSSVPAGLTLPASVSVFPQAGAFAPQPLLPTPSSAGPRPPPPQTGTNPFL.

6 residues coordinate a 1,2-diacyl-sn-glycero-3-phospho-(1D-myo-inositol-4,5-bisphosphate): Arg8, Lys11, Arg25, Asn30, Arg63, and His73. The ENTH domain occupies 12–144; it reads NIVHNYSEAE…KDEERLRQER (133 aa). The tract at residues 172-214 is disordered; sequence YGEDYSRSRGSPSSYNSSSSSPRYTSDLEQARPQTSGEEELQL. Over residues 179 to 196 the composition is skewed to low complexity; sequence SRGSPSSYNSSSSSPRYT. Ser191 and Ser192 each carry phosphoserine. 2 consecutive UIM domains span residues 209–228 and 236–255; these read EEEL…AEKP and DEDL…HEKE. Residues 257 to 296 form a disordered region; that stretch reads RSWQGDGSPMANGAGAVVHHQRDREPEREERKEEEKLKTS. Ser264 is subject to Phosphoserine. Residues 276–294 are compositionally biased toward basic and acidic residues; sequence HQRDREPEREERKEEEKLK. 8 consecutive repeat copies span residues 321–323, 344–346, 371–373, 387–389, 404–406, 524–526, 537–539, and 629–631. The interval 321–406 is 5 X 3 AA repeats of [DE]-P-W; that stretch reads DPWDIPGFRP…KLPSTGADPW (86 aa). Disordered regions lie at residues 326–501, 525–560, and 604–632; these read PGFR…SFLG, PFLT…PALG, and AFAP…NPFL. Residues 353-371 show a composition bias toward polar residues; the sequence is TVLSRSQPWDLTPMLSSSE. The segment at 524 to 631 is 3 X 3 AA repeats of N-P-F; that stretch reads NPFLTGLSAP…PPPQTGTNPF (108 aa).

Belongs to the epsin family. As to expression, detected in migrating keratinocytes from wounded skin, but not in differentiating keratinocytes or in normal skin. Detected in chronic wounds, basal cell carcinoma and ulcerative colitis.

It localises to the cytoplasm. The protein localises to the perinuclear region. The protein resides in the cytoplasmic vesicle. Its subcellular location is the clathrin-coated vesicle. It is found in the nucleus. The protein is Epsin-3 (EPN3) of Homo sapiens (Human).